The chain runs to 347 residues: 3-isopropylmalate dehydrogenase (347 aa).

Substrate contacts are provided by arginine 94, arginine 104, arginine 128, and aspartate 219. Residues aspartate 219, aspartate 243, and aspartate 247 each coordinate Mg(2+). An NAD(+)-binding site is contributed by 279 to 291 (GSAPDIAGQGKAD).

This sequence belongs to the isocitrate and isopropylmalate dehydrogenases family. LeuB type 2 subfamily. As to quaternary structure, homodimer. It depends on Mg(2+) as a cofactor. Mn(2+) serves as cofactor.

Its subcellular location is the cytoplasm. It catalyses the reaction (2R,3S)-3-isopropylmalate + NAD(+) = 4-methyl-2-oxopentanoate + CO2 + NADH. It participates in amino-acid biosynthesis; L-leucine biosynthesis; L-leucine from 3-methyl-2-oxobutanoate: step 3/4. In terms of biological role, catalyzes the oxidation of 3-carboxy-2-hydroxy-4-methylpentanoate (3-isopropylmalate) to 3-carboxy-4-methyl-2-oxopentanoate. The product decarboxylates to 4-methyl-2 oxopentanoate. The protein is 3-isopropylmalate dehydrogenase of Streptomyces coelicolor (strain ATCC BAA-471 / A3(2) / M145).